The primary structure comprises 826 residues: Zinc phosphodiesterase ELAC protein 2 (826 aa).

A mitochondrion-targeting transit peptide spans 1–16 (MWALCSLLRSAAGRTM). Disordered stretches follow at residues 16–51 (MSQG…PSGC) and 188–231 (EQRR…VSQR). Positions 27 to 38 (ARRERPRKDPLR) are enriched in basic and acidic residues. A phosphoserine mark is found at Ser-199, Ser-208, Ser-212, Ser-229, Ser-618, and Ser-736. Residues 208–224 (SPERSSDSESNENEPHL) are compositionally biased toward basic and acidic residues. The disordered stretch occupies residues 798–826 (ELAGGLEDGEPQQKRAHTEEPQAKKVRAQ). A compositionally biased stretch (basic and acidic residues) spans 808–820 (PQQKRAHTEEPQA).

It belongs to the RNase Z family. In terms of assembly, homodimer. Interacts with PTCD1. Zn(2+) is required as a cofactor. In terms of tissue distribution, widely expressed. Highly expressed in heart, placenta, liver, skeletal muscle, kidney, pancreas, testis and ovary. Weakly expressed in brain, lung, spleen, thymus, prostate, small intestine, colon and leukocytes.

It localises to the mitochondrion. The protein resides in the mitochondrion matrix. The protein localises to the mitochondrion nucleoid. It is found in the nucleus. The catalysed reaction is Endonucleolytic cleavage of RNA, removing extra 3' nucleotides from tRNA precursor, generating 3' termini of tRNAs. A 3'-hydroxy group is left at the tRNA terminus and a 5'-phosphoryl group is left at the trailer molecule.. In terms of biological role, zinc phosphodiesterase, which displays mitochondrial tRNA 3'-processing endonuclease activity. Involved in tRNA maturation, by removing a 3'-trailer from precursor tRNA. Associates with mitochondrial DNA complexes at the nucleoids to initiate RNA processing and ribosome assembly. In Homo sapiens (Human), this protein is Zinc phosphodiesterase ELAC protein 2 (ELAC2).